The sequence spans 383 residues: Galactokinase (383 aa).

34–37 contributes to the substrate binding site; sequence EHTD. 124–130 is an ATP binding site; sequence GAGLSSS. Positions 130 and 162 each coordinate Mg(2+). D174 (proton acceptor) is an active-site residue. Position 223 (Y223) interacts with substrate.

The protein belongs to the GHMP kinase family. GalK subfamily.

It is found in the cytoplasm. The catalysed reaction is alpha-D-galactose + ATP = alpha-D-galactose 1-phosphate + ADP + H(+). It functions in the pathway carbohydrate metabolism; galactose metabolism. Its function is as follows. Catalyzes the transfer of the gamma-phosphate of ATP to D-galactose to form alpha-D-galactose-1-phosphate (Gal-1-P). The sequence is that of Galactokinase from Yersinia pseudotuberculosis serotype O:1b (strain IP 31758).